We begin with the raw amino-acid sequence, 151 residues long: Myosin light polypeptide 6 (151 aa).

Cys2 carries the N-acetylcysteine modification. The EF-hand 1 domain occupies 7–42 (DQTAEFKEAFQLFDRTGDGKILYSQCGDVMRALGQN). Phosphoserine is present on Ser57. Lys81 carries the N6-acetyllysine modification. 2 EF-hand domains span residues 84-119 (GTYE…LGEK) and 119-151 (KMTE…VLNG).

As to quaternary structure, myosin is a hexamer of 2 heavy chains and 4 light chains. Interacts with SPATA6.

Regulatory light chain of myosin. Does not bind calcium. This chain is Myosin light polypeptide 6 (Myl6), found in Rattus norvegicus (Rat).